We begin with the raw amino-acid sequence, 410 residues long: Demethyl-4-deoxygadusol synthase (410 aa).

NAD(+)-binding positions include 56–58, 87–90, 119–123, 143–144, lysine 156, lysine 165, and 183–186; these read DAN, EPDK, GLITD, TT, and LLRT. The Zn(2+) site is built by glutamate 198, histidine 271, and histidine 287.

Belongs to the sugar phosphate cyclases superfamily. DDGS family. In terms of assembly, homodimer. It depends on NAD(+) as a cofactor. The cofactor is Co(2+). Requires Zn(2+) as cofactor.

The catalysed reaction is D-sedoheptulose 7-phosphate = (R)-demethyl-4-deoxygadusol + phosphate + H2O + H(+). Functionally, catalyzes the conversion of sedoheptulose 7-phosphate to demethyl-4-deoxygadusol (DDG). Involved in the synthesis of the mycosporine-like amino acid shinorine, a natural sunscreen compound that protects the cell against UV radiation. This chain is Demethyl-4-deoxygadusol synthase, found in Trichormus variabilis (strain ATCC 29413 / PCC 7937) (Anabaena variabilis).